Reading from the N-terminus, the 160-residue chain is Transcription elongation factor GreA (160 aa).

The stretch at 43–76 forms a coiled coil; that stretch reads LSENAEYDAAREQQRQLENKIGDLESKLTRATIL.

Belongs to the GreA/GreB family.

Its function is as follows. Necessary for efficient RNA polymerase transcription elongation past template-encoded arresting sites. The arresting sites in DNA have the property of trapping a certain fraction of elongating RNA polymerases that pass through, resulting in locked ternary complexes. Cleavage of the nascent transcript by cleavage factors such as GreA or GreB allows the resumption of elongation from the new 3'terminus. GreA releases sequences of 2 to 3 nucleotides. This Chlorobium phaeobacteroides (strain BS1) protein is Transcription elongation factor GreA.